The sequence spans 125 residues: Holo-[acyl-carrier-protein] synthase (125 aa).

Positions 6 and 55 each coordinate Mg(2+).

Belongs to the P-Pant transferase superfamily. AcpS family. Mg(2+) serves as cofactor.

The protein localises to the cytoplasm. It catalyses the reaction apo-[ACP] + CoA = holo-[ACP] + adenosine 3',5'-bisphosphate + H(+). Functionally, transfers the 4'-phosphopantetheine moiety from coenzyme A to a Ser of acyl-carrier-protein. In Chlorobium phaeovibrioides (strain DSM 265 / 1930) (Prosthecochloris vibrioformis (strain DSM 265)), this protein is Holo-[acyl-carrier-protein] synthase.